A 322-amino-acid polypeptide reads, in one-letter code: NADH-quinone oxidoreductase subunit H (322 aa).

Helical transmembrane passes span 12-32 (IGKA…MSFI), 79-99 (IFVL…AVVP), 111-131 (VGLL…LFAG), 151-171 (LSYE…TGSF), 183-203 (LWNV…GVAV), 234-254 (FFVG…TLFF), 262-282 (LPPF…FILL), and 301-321 (VCLP…LMNA).

The protein belongs to the complex I subunit 1 family. As to quaternary structure, NDH-1 is composed of 14 different subunits. Subunits NuoA, H, J, K, L, M, N constitute the membrane sector of the complex.

It localises to the cell inner membrane. The enzyme catalyses a quinone + NADH + 5 H(+)(in) = a quinol + NAD(+) + 4 H(+)(out). NDH-1 shuttles electrons from NADH, via FMN and iron-sulfur (Fe-S) centers, to quinones in the respiratory chain. The immediate electron acceptor for the enzyme in this species is believed to be ubiquinone. Couples the redox reaction to proton translocation (for every two electrons transferred, four hydrogen ions are translocated across the cytoplasmic membrane), and thus conserves the redox energy in a proton gradient. This subunit may bind ubiquinone. The polypeptide is NADH-quinone oxidoreductase subunit H (Aeromonas hydrophila subsp. hydrophila (strain ATCC 7966 / DSM 30187 / BCRC 13018 / CCUG 14551 / JCM 1027 / KCTC 2358 / NCIMB 9240 / NCTC 8049)).